A 491-amino-acid polypeptide reads, in one-letter code: Ketol-acid reductoisomerase (NADP(+)) (491 aa).

A KARI N-terminal Rossmann domain is found at Leu-14 to Ser-208. Residues Cys-45 to Gln-48, Arg-68, Arg-76, Ser-78, and Asp-108 to Gln-110 contribute to the NADP(+) site. Residue His-132 is part of the active site. Gly-158 is an NADP(+) binding site. 2 consecutive KARI C-terminal knotted domains span residues Ser-209–Lys-344 and Tyr-345–Met-485. The Mg(2+) site is built by Asp-217, Glu-221, Glu-389, and Glu-393. Ser-414 contacts substrate.

It belongs to the ketol-acid reductoisomerase family. Requires Mg(2+) as cofactor.

It catalyses the reaction (2R)-2,3-dihydroxy-3-methylbutanoate + NADP(+) = (2S)-2-acetolactate + NADPH + H(+). The enzyme catalyses (2R,3R)-2,3-dihydroxy-3-methylpentanoate + NADP(+) = (S)-2-ethyl-2-hydroxy-3-oxobutanoate + NADPH + H(+). Its pathway is amino-acid biosynthesis; L-isoleucine biosynthesis; L-isoleucine from 2-oxobutanoate: step 2/4. It functions in the pathway amino-acid biosynthesis; L-valine biosynthesis; L-valine from pyruvate: step 2/4. Functionally, involved in the biosynthesis of branched-chain amino acids (BCAA). Catalyzes an alkyl-migration followed by a ketol-acid reduction of (S)-2-acetolactate (S2AL) to yield (R)-2,3-dihydroxy-isovalerate. In the isomerase reaction, S2AL is rearranged via a Mg-dependent methyl migration to produce 3-hydroxy-3-methyl-2-ketobutyrate (HMKB). In the reductase reaction, this 2-ketoacid undergoes a metal-dependent reduction by NADPH to yield (R)-2,3-dihydroxy-isovalerate. In Pasteurella multocida (strain Pm70), this protein is Ketol-acid reductoisomerase (NADP(+)).